An 81-amino-acid polypeptide reads, in one-letter code: Putative truncated GMC-type inactive oxidoreductase R833 (81 aa).

Belongs to the GMC oxidoreductase family.

In Acanthamoeba polyphaga mimivirus (APMV), this protein is Putative truncated GMC-type inactive oxidoreductase R833.